A 121-amino-acid chain; its full sequence is Basic phospholipase A2 homolog blK-PLA2 (121 aa).

Disulfide bonds link Cys26–Cys115, Cys28–Cys44, Cys43–Cys95, Cys49–Cys121, Cys50–Cys88, Cys57–Cys81, and Cys75–Cys86. The segment at 105–117 (KKYRYHLKPFCKK) is important for membrane-damaging activities in eukaryotes and bacteria; heparin-binding.

The protein belongs to the phospholipase A2 family. Group II subfamily. K49 sub-subfamily. In terms of assembly, homodimer; non-covalently linked. Expressed by the venom gland.

Its subcellular location is the secreted. Its function is as follows. Snake venom phospholipase A2 (PLA2) homolog that lacks enzymatic activity. Shows myotoxic and edema-inducing activities in vivo. A model of myotoxic mechanism has been proposed: an apo Lys49-PLA2 is activated by the entrance of a hydrophobic molecule (e.g. fatty acid) at the hydrophobic channel of the protein leading to a reorientation of a monomer. This reorientation causes a transition between 'inactive' to 'active' states, causing alignment of C-terminal and membrane-docking sites (MDoS) side-by-side and putting the membrane-disruption sites (MDiS) in the same plane, exposed to solvent and in a symmetric position for both monomers. The MDoS region stabilizes the toxin on membrane by the interaction of charged residues with phospholipid head groups. Subsequently, the MDiS region destabilizes the membrane with penetration of hydrophobic residues. This insertion causes a disorganization of the membrane, allowing an uncontrolled influx of ions (i.e. calcium and sodium), and eventually triggering irreversible intracellular alterations and cell death. In Bothrops leucurus (Whitetail lancehead), this protein is Basic phospholipase A2 homolog blK-PLA2.